A 1934-amino-acid polypeptide reads, in one-letter code: Pyruvate dehydrogenase [NADP(+)] (1934 aa).

4Fe-4S ferredoxin-type domains are found at residues serine 710–leucine 739 and tyrosine 767–leucine 796. Positions 719, 722, 725, 729, 776, 779, 782, and 786 each coordinate [4Fe-4S] cluster. Residues methionine 1288–leucine 1438 form the Flavodoxin-like domain. The FAD-binding FR-type domain maps to proline 1501–proline 1759. FAD contacts are provided by residues tyrosine 1542 to glutamine 1553 and isoleucine 1685 to cysteine 1695.

It in the N-terminal section; belongs to the pyruvate:ferredoxin/flavodoxin oxidoreductase family. As to quaternary structure, homodimer. The cofactor is FAD. It depends on FMN as a cofactor. Thiamine diphosphate is required as a cofactor.

The catalysed reaction is pyruvate + NADP(+) + CoA = acetyl-CoA + CO2 + NADPH. May have an important role in respiratory metabolism. Cryptosporidium have a relic mitochondrion with no function in energy metabolism so it is not known if PFOR has a function. The protein is Pyruvate dehydrogenase [NADP(+)] (PFOR) of Cryptosporidium parvum.